A 189-amino-acid chain; its full sequence is Stathmin-4 (189 aa).

S-palmitoyl cysteine attachment occurs at residues Cys20 and Cys22. The 142-residue stretch at 48 to 189 folds into the SLD domain; it reads SDMEVIELNK…NKELKEEASR (142 aa). Ser90 is subject to Phosphoserine. A coiled-coil region spans residues 90–188; sequence SLEEIQKKLE…KNKELKEEAS (99 aa). A disordered region spans residues 168-189; sequence QEKDKHAEEVRKNKELKEEASR.

It belongs to the stathmin family.

Its subcellular location is the golgi apparatus. It localises to the cell projection. The protein resides in the growth cone. It is found in the axon. Functionally, exhibits microtubule-destabilizing activity. The chain is Stathmin-4 (STMN4) from Homo sapiens (Human).